Reading from the N-terminus, the 546-residue chain is NAD(P)H-quinone oxidoreductase chain 4 (546 aa).

Transmembrane regions (helical) follow at residues Phe24–Phe44, Phe56–Phe76, Ile106–Trp126, Pro132–Val152, Leu156–Trp176, Phe188–Phe208, Ile232–His252, Thr263–Leu283, Phe297–Phe317, Ile326–Ser346, Ala352–Ala372, Phe396–Val416, Val437–Met457, and Val484–Val504.

Belongs to the complex I subunit 4 family.

It is found in the cellular thylakoid membrane. It carries out the reaction a plastoquinone + NADH + (n+1) H(+)(in) = a plastoquinol + NAD(+) + n H(+)(out). The catalysed reaction is a plastoquinone + NADPH + (n+1) H(+)(in) = a plastoquinol + NADP(+) + n H(+)(out). NDH-1 shuttles electrons from NAD(P)H, via FMN and iron-sulfur (Fe-S) centers, to quinones in the respiratory chain. The immediate electron acceptor for the enzyme in this species is believed to be plastoquinone. Couples the redox reaction to proton translocation (for every two electrons transferred, four hydrogen ions are translocated across the cytoplasmic membrane), and thus conserves the redox energy in a proton gradient. The chain is NAD(P)H-quinone oxidoreductase chain 4 from Prochlorococcus marinus (strain MIT 9515).